Reading from the N-terminus, the 320-residue chain is tRNA N6-adenosine threonylcarbamoyltransferase (320 aa).

Fe cation-binding residues include H113 and H117. Residues 143 to 147 (VVSGG), D176, G189, D193, and N281 contribute to the substrate site. Residue D305 participates in Fe cation binding.

The protein belongs to the KAE1 / TsaD family. Fe(2+) serves as cofactor.

The protein resides in the cytoplasm. The catalysed reaction is L-threonylcarbamoyladenylate + adenosine(37) in tRNA = N(6)-L-threonylcarbamoyladenosine(37) in tRNA + AMP + H(+). In terms of biological role, required for the formation of a threonylcarbamoyl group on adenosine at position 37 (t(6)A37) in tRNAs that read codons beginning with adenine. Is involved in the transfer of the threonylcarbamoyl moiety of threonylcarbamoyl-AMP (TC-AMP) to the N6 group of A37, together with TsaE and TsaB. TsaD likely plays a direct catalytic role in this reaction. The protein is tRNA N6-adenosine threonylcarbamoyltransferase of Mycoplasmoides gallisepticum (strain R(low / passage 15 / clone 2)) (Mycoplasma gallisepticum).